The following is a 324-amino-acid chain: Phospho-N-acetylmuramoyl-pentapeptide-transferase (324 aa).

The next 9 helical transmembrane spans lie at 13–33 (VLSALLMGFAFSMVLGPIFIP), 57–77 (GTPTMGGLIFFISVSVTMLII), 85–105 (GMIVLYSLIAFGIIGFLDDIL), 121–141 (MILLLLFSIALAYYGYTNIGT), 143–163 (IIIPFMNSKLNLGIFYIPLVV), 179–199 (IDGLASSVTVIVLTFFAIVGF), 201–221 (TGHYQVGVFSIALAGALLGFL), 238–260 (LALGGAIATIALILKMPLFIIIV), and 303–323 (VKLVTVFSIITLILCIIGFIA).

This sequence belongs to the glycosyltransferase 4 family. MraY subfamily. Mg(2+) is required as a cofactor.

It is found in the cell membrane. It carries out the reaction UDP-N-acetyl-alpha-D-muramoyl-L-alanyl-gamma-D-glutamyl-meso-2,6-diaminopimeloyl-D-alanyl-D-alanine + di-trans,octa-cis-undecaprenyl phosphate = di-trans,octa-cis-undecaprenyl diphospho-N-acetyl-alpha-D-muramoyl-L-alanyl-D-glutamyl-meso-2,6-diaminopimeloyl-D-alanyl-D-alanine + UMP. The protein operates within cell wall biogenesis; peptidoglycan biosynthesis. Functionally, catalyzes the initial step of the lipid cycle reactions in the biosynthesis of the cell wall peptidoglycan: transfers peptidoglycan precursor phospho-MurNAc-pentapeptide from UDP-MurNAc-pentapeptide onto the lipid carrier undecaprenyl phosphate, yielding undecaprenyl-pyrophosphoryl-MurNAc-pentapeptide, known as lipid I. In Clostridium botulinum (strain Eklund 17B / Type B), this protein is Phospho-N-acetylmuramoyl-pentapeptide-transferase.